Reading from the N-terminus, the 354-residue chain is Carbonic anhydrase 12 (354 aa).

The signal sequence occupies residues 1 to 24 (MPRRSLHAAAVLLLVILKEQPSSP). The Extracellular segment spans residues 25–301 (APVNGSKWTY…VQVCTAAGLS (277 aa)). N-linked (GlcNAc...) asparagine glycans are attached at residues N28 and N80. The region spanning 30 to 289 (SKWTYFGPDG…FDERLVYTSF (260 aa)) is the Alpha-carbonic anhydrase domain. Residues C50 and C230 are joined by a disulfide bond. H94 acts as the Proton donor/acceptor in catalysis. The Zn(2+) site is built by H119, H121, and H145. An N-linked (GlcNAc...) asparagine glycan is attached at N162. 226-227 (TT) contributes to the substrate binding site. Residues 302–322 (LGIILSLALAGILGICIVVVV) traverse the membrane as a helical segment. The Cytoplasmic portion of the chain corresponds to 323-354 (SIWLFRRKSIKKGDNKGVIYKPATKMETEAHA).

The protein belongs to the alpha-carbonic anhydrase family. Homodimer. Zn(2+) serves as cofactor. In terms of tissue distribution, highly expressed in colon, kidney, prostate, intestine and activated lymphocytes. Expressed at much higher levels in the renal cell cancers than in surrounding normal kidney tissue. Moderately expressed in pancreas, ovary and testis. Expressed in sweat glands and bronchiolar epithelium.

It is found in the membrane. Its subcellular location is the cell membrane. The catalysed reaction is hydrogencarbonate + H(+) = CO2 + H2O. With respect to regulation, inhibited by coumarins, saccharin, sulfonamide derivatives such as acetazolamide (AZA), benzenesulfonamide and derivatives (4-carboxyethylbenzene-sulfonamide, 4-carboxyethylbenzene-sulfonamide ethyl ester, 4-(acetyl-2-aminoethyl)benzene-sulfonamide, 4-aminoethylbenzene-sulfonamide) and Foscarnet (phosphonoformate trisodium salt). Functionally, reversible hydration of carbon dioxide. This chain is Carbonic anhydrase 12, found in Homo sapiens (Human).